Here is a 179-residue protein sequence, read N- to C-terminus: Transcription initiation factor TFIID subunit 10 (179 aa).

The disordered stretch occupies residues 1 to 23 (MNDPEQYEPSSSTESVLMPPPAL).

It belongs to the TAF10 family. In terms of assembly, component of the TFIID basal transcription factor complex, composed of TATA-box-binding protein tbp-1, and a number of TBP-associated factors (TAFs).

The protein resides in the nucleus. Functionally, the TFIID basal transcription factor complex plays a major role in the initiation of RNA polymerase II (Pol II)-dependent transcription. TFIID recognizes and binds promoters via its subunit tbp-1, a TATA-box-binding protein, and promotes assembly of the pre-initiation complex (PIC). The TFIID complex consists of tbp-1 and TBP-associated factors (TAFs), including taf-10. Essential for early embryonic development, but not required for transcription of some genes; probably acts via activating transcription initiation by RNA Pol II, as part of the TFIID complex. This Caenorhabditis elegans protein is Transcription initiation factor TFIID subunit 10.